The sequence spans 1698 residues: Cullin-7 (1698 aa).

The tract at residues 315–357 is disordered; the sequence is QASDRPRSSARSPGSIFQPQLADVSPGLPAAQAQPSFRRSRRF. A Phosphoserine modification is found at serine 339. Positions 360-433 constitute a CPH domain; the sequence is RSEFASGNTY…HWHMLEILGF (74 aa). Residues 601–611 show a composition bias toward basic and acidic residues; that stretch reads SEDAAKVEAKE. Residues 601-623 are disordered; the sequence is SEDAAKVEAKEPPSQSPNTPLQR. The DOC domain occupies 814–993; sequence PINIPFFDVF…HTRLFYMVRA (180 aa). The disordered stretch occupies residues 1345-1370; the sequence is GASGKEHKSEKEEEAGAAAVVDVAEG. A Glycyl lysine isopeptide (Lys-Gly) (interchain with G-Cter in NEDD8) cross-link involves residue lysine 1576.

The protein belongs to the cullin family. In terms of assembly, component of the 3M complex, composed of core components CUL7, CCDC8 and OBSL1. Component of the Cul7-RING(FBXW8) complex consisting of CUL7, RBX1, SKP1 and FBXW8. Within the Cul7-RING(FBXW8) complex interacts with FBXW8 and RBX1, but not with SKP1. Interacts with CUL1 (via the C-terminal domain); the interaction seems to be mediated by FBXW8; it is likely specific to FBXW8, but not other F-box proteins. Interacts (via the CPH domain) with p53/TP53; the interaction preferentially involves tetrameric and dimeric p53/TP53; this interaction recruits p53/TP53 for ubiquitination by neddylated CUL1-RBX1. The CUL7-CUL9 heterodimer seems to interact specifically with p53/TP53. Interacts with FBXW8; interaction is mutually exclusive of binding to CUL9 or p53/TP53. Interacts with CUL9; leading to inhibited CUL9 activity. Interacts with OBSL1. Interacts (as part of the 3M complex) with HDAC4 and HDAC5; it is negatively regulated by ANKRA2. As to quaternary structure, (Microbial infection) Interacts with SV40 Large T antigen; this interaction seems to inhibit CUL7. According to a report, may not be neddylated despite the conserved consensus site for neddylation at Lys-1576. Structural study of the Cul7-RING(FBXW8) reveals that both CUL7 and RBX1 are in orientations that are incompatible with neddylation. Highly expressed in fetal kidney and adult skeletal muscle. Also abundant in fetal brain, as well as in adult pancreas, kidney, placenta and heart. Detected in trophoblasts, lymphoblasts, osteoblasts, chondrocytes and skin fibroblasts.

The protein localises to the cytoplasm. The protein resides in the cytoskeleton. It localises to the microtubule organizing center. Its subcellular location is the centrosome. It is found in the perinuclear region. The protein localises to the golgi apparatus. It functions in the pathway protein modification; protein ubiquitination. Core component of the 3M and Cul7-RING(FBXW8) complexes, which mediate the ubiquitination and subsequent proteasomal degradation of target proteins. Core component of the 3M complex, a complex required to regulate microtubule dynamics and genome integrity. It is unclear how the 3M complex regulates microtubules, it could act by controlling the level of a microtubule stabilizer. The Cul7-RING(FBXW8) complex alone lacks ubiquitination activity and does not promote polyubiquitination and proteasomal degradation of p53/TP53. However it mediates recruitment of p53/TP53 for ubiquitination by neddylated CUL1-RBX1. Interaction with CUL9 is required to inhibit CUL9 activity and ubiquitination of BIRC5. The Cul7-RING(FBXW8) complex also mediates ubiquitination and consequent degradation of target proteins such as GORASP1, IRS1 and MAP4K1/HPK1. Ubiquitination of GORASP1 regulates Golgi morphogenesis and dendrite patterning in brain. Mediates ubiquitination and degradation of IRS1 in a mTOR-dependent manner: the Cul7-RING(FBXW8) complex recognizes and binds IRS1 previously phosphorylated by S6 kinase (RPS6KB1 or RPS6KB2). The Cul7-RING(FBXW8) complex also mediates ubiquitination of MAP4K1/HPK1: recognizes and binds autophosphorylated MAP4K1/HPK1, leading to its degradation, thereby affecting cell proliferation and differentiation. Acts as a regulator in trophoblast cell epithelial-mesenchymal transition and placental development. While the Cul7-RING(FBXW8) and the 3M complexes are associated and involved in common processes, CUL7 and the Cul7-RING(FBXW8) complex may have additional functions. Probably plays a role in the degradation of proteins involved in endothelial proliferation and/or differentiation. This is Cullin-7 (CUL7) from Homo sapiens (Human).